Consider the following 322-residue polypeptide: Cytochrome f (322 aa).

The first 35 residues, 1 to 35, serve as a signal peptide directing secretion; it reads MQTRNTFSWTWIREEITRSISVSLMIYIITWSSIS. Heme contacts are provided by Tyr-38, Cys-58, Cys-61, and His-62. The chain crosses the membrane as a helical span at residues 288–308; that stretch reads VQGLLFFLGSVVLAQIFLVLK.

The protein belongs to the cytochrome f family. As to quaternary structure, the 4 large subunits of the cytochrome b6-f complex are cytochrome b6, subunit IV (17 kDa polypeptide, petD), cytochrome f and the Rieske protein, while the 4 small subunits are PetG, PetL, PetM and PetN. The complex functions as a dimer. The cofactor is heme.

Its subcellular location is the plastid. The protein resides in the chloroplast thylakoid membrane. Functionally, component of the cytochrome b6-f complex, which mediates electron transfer between photosystem II (PSII) and photosystem I (PSI), cyclic electron flow around PSI, and state transitions. The chain is Cytochrome f from Aethionema grandiflorum (Persian stone-cress).